Consider the following 257-residue polypeptide: Small ribosomal subunit protein uS4c (257 aa).

S4 RNA-binding domains are found at residues 110-170 (MRLD…QLVN) and 189-255 (KTLP…KNYL).

The protein belongs to the universal ribosomal protein uS4 family. As to quaternary structure, part of the 30S ribosomal subunit. Contacts protein S5. The interaction surface between S4 and S5 is involved in control of translational fidelity.

The protein resides in the plastid. The protein localises to the chloroplast. One of the primary rRNA binding proteins, it binds directly to 16S rRNA where it nucleates assembly of the body of the 30S subunit. In terms of biological role, with S5 and S12 plays an important role in translational accuracy. In Chlamydomonas reinhardtii (Chlamydomonas smithii), this protein is Small ribosomal subunit protein uS4c (rps4).